Consider the following 294-residue polypeptide: C-type lectin domain family 4 member G (294 aa).

The Cytoplasmic portion of the chain corresponds to 1–30; the sequence is MNTGEYNKLGSAIEEVSRGQLGRWECYKQR. The chain crosses the membrane as a helical; Signal-anchor for type II membrane protein span at residues 31 to 51; the sequence is LFFLVLALLVATVLWALILST. Over 52 to 294 the chain is Extracellular; the sequence is LLSSASSKLR…WICEKRSSCY (243 aa). Residue asparagine 73 is glycosylated (N-linked (GlcNAc...) asparagine). A coiled-coil region spans residues 100 to 151; it reads AQLQTTLAEFKDIQAKLMEQESILKELQERVTQDLAKASRDRENIRSELFQA. Asparagine 159, asparagine 246, and asparagine 256 each carry an N-linked (GlcNAc...) asparagine glycan. The 116-residue stretch at 172–287 folds into the C-type lectin domain; the sequence is FQGSCYYFSE…CTNERDGWIC (116 aa). Cysteine 264 and cysteine 278 are joined by a disulfide.

The protein resides in the cell membrane. Its function is as follows. Binds mannose, N-acetylglucosamine (GlcNAc) and fucose, but not galactose, in a Ca(2+)-dependent manner. In Mus musculus (Mouse), this protein is C-type lectin domain family 4 member G (Clec4g).